Here is a 248-residue protein sequence, read N- to C-terminus: ATP synthase subunit a (248 aa).

Transmembrane regions (helical) follow at residues 27-47 (FTNS…LMLV), 83-103 (FFPL…IGIV), 113-133 (LIVT…YGFS), 142-162 (LFVP…IEVI), 192-212 (FVAM…LPLG), and 215-235 (IALT…FAIL).

Belongs to the ATPase A chain family. F-type ATPases have 2 components, CF(1) - the catalytic core - and CF(0) - the membrane proton channel. CF(1) has five subunits: alpha(3), beta(3), gamma(1), delta(1), epsilon(1). CF(0) has four main subunits: a, b, b' and c.

Its subcellular location is the cell inner membrane. Key component of the proton channel; it plays a direct role in the translocation of protons across the membrane. The sequence is that of ATP synthase subunit a from Rhodopseudomonas palustris (strain ATCC BAA-98 / CGA009).